Here is a 281-residue protein sequence, read N- to C-terminus: Glycerol uptake facilitator protein (281 aa).

At 1 to 5 the chain is on the cytoplasmic side; that stretch reads MSQTS. The chain crosses the membrane as a helical span at residues 6–34; sequence TLKGQCIAEFLGTGLLIFFGVGCVAALKV. Residues 35–39 lie on the Periplasmic side of the membrane; the sequence is AGASF. The chain crosses the membrane as a helical span at residues 40-60; that stretch reads GQWEISVIWGLGVAMAIYLTA. At 61 to 63 the chain is on the cytoplasmic side; it reads GVS. An intramembrane segment occupies 64 to 67; it reads GAHL. Residues 68–70 carry the NPA 1 motif; the sequence is NPA. Positions 68-78 form an intramembrane region, helical; it reads NPAVTIALWLF. Residues 79-84 lie on the Cytoplasmic side of the membrane; that stretch reads ACFDKR. A helical transmembrane segment spans residues 85–108; it reads KVIPFIVSQVAGAFCAAALVYGLY. Topologically, residues 109 to 143 are periplasmic; that stretch reads YNLFFDFEQTHHIVRGSVESVDLAGTFSTYPNPHI. A helical membrane pass occupies residues 144-169; that stretch reads NFVQAFAVEMVITAILMGLILALTDD. Residues 170–177 are Cytoplasmic-facing; that stretch reads GNGVPRGP. Residues 178–194 traverse the membrane as a helical segment; sequence LAPLLIGLLIAVIGASM. The Periplasmic segment spans residues 195–198; sequence GPLT. An intramembrane segment occupies 199-202; that stretch reads GFAM. The NPA 2 signature appears at 203–205; the sequence is NPA. Residues 203–216 constitute an intramembrane region (helical); it reads NPARDFGPKVFAWL. The Periplasmic portion of the chain corresponds to 217-231; the sequence is AGWGNVAFTGGRDIP. Residues 232–254 form a helical membrane-spanning segment; it reads YFLVPLFSPIVGAIVGAFAYRKL. The Cytoplasmic portion of the chain corresponds to 255-281; that stretch reads IGRHLPCDICVVEEKETTTPSEQKASL.

Belongs to the MIP/aquaporin (TC 1.A.8) family. As to quaternary structure, homotetramer.

Its subcellular location is the cell inner membrane. The enzyme catalyses glycerol(in) = glycerol(out). Mediates glycerol diffusion across the cytoplasmic membrane via a pore-type mechanism. In Shigella flexneri, this protein is Glycerol uptake facilitator protein (glpF).